Consider the following 321-residue polypeptide: ATP-dependent 6-phosphofructokinase (321 aa).

Gly-12 is a binding site for ATP. ADP contacts are provided by residues 22–26 (RGVVR) and 55–60 (RYSVSD). Residues 73–74 (RF) and 103–106 (GDGS) contribute to the ATP site. Residue Asp-104 participates in Mg(2+) binding. Substrate is bound at residue 127 to 129 (TID). Asp-129 functions as the Proton acceptor in the catalytic mechanism. Arg-156 is an ADP binding site. Residues Arg-164 and 171 to 173 (MGR) contribute to the substrate site. Residues 187-189 (GCE), Arg-213, and 215-217 (KRH) contribute to the ADP site. Residues Glu-224, Arg-245, and 251 to 254 (HIQR) each bind substrate.

It belongs to the phosphofructokinase type A (PFKA) family. ATP-dependent PFK group I subfamily. Prokaryotic clade 'B1' sub-subfamily. Homotetramer. The cofactor is Mg(2+).

The protein resides in the cytoplasm. The enzyme catalyses beta-D-fructose 6-phosphate + ATP = beta-D-fructose 1,6-bisphosphate + ADP + H(+). It functions in the pathway carbohydrate degradation; glycolysis; D-glyceraldehyde 3-phosphate and glycerone phosphate from D-glucose: step 3/4. Allosterically activated by ADP and other diphosphonucleosides, and allosterically inhibited by phosphoenolpyruvate. Its function is as follows. Catalyzes the phosphorylation of D-fructose 6-phosphate to fructose 1,6-bisphosphate by ATP, the first committing step of glycolysis. The sequence is that of ATP-dependent 6-phosphofructokinase from Haemophilus influenzae (strain PittEE).